The primary structure comprises 833 residues: Glycerol-3-phosphate acyltransferase (833 aa).

Residues 309-314 (CHRSHI) carry the HXXXXD motif motif.

This sequence belongs to the GPAT/DAPAT family.

The protein localises to the cell inner membrane. It carries out the reaction sn-glycerol 3-phosphate + an acyl-CoA = a 1-acyl-sn-glycero-3-phosphate + CoA. Its pathway is phospholipid metabolism; CDP-diacylglycerol biosynthesis; CDP-diacylglycerol from sn-glycerol 3-phosphate: step 1/3. This chain is Glycerol-3-phosphate acyltransferase, found in Pseudomonas syringae pv. syringae (strain B728a).